The following is a 638-amino-acid chain: MATAAAASTALTGATTAAPKARRRAHLLATRRALAAPIRCSAASPAMPMAPPATPLRPWGPTDPRKGADILVESLERCGVRDVFAYPGGASMEIHQALTRSPVIANHLFRHEQGEAFAASGYARSSGRVGVCIATSGPGATNLVSALADALLDSVPMVAITGQVPRRMIGTDAFQETPIVEVTRSITKHNYLVLDVDDIPRVVQEAFFLASSGRPGPVLVDIPKDIQQQMAVPVWDKPMSLPGYIARLPKPPATELLEQVLRLVGESRRPVLYVGGGCAASGEELRRFVELTGIPVTTTLMGLGNFPSDDPLSLRMLGMHGTVYANYAVDKADLLLALGVRFDDRVTGKIEAFASRAKIVHVDIDPAEIGKNKQPHVSICADVKLALQGMNALLEGSTSKKSFDFGSWNDELDQQKREFPLGYKTSNEEIQPQYAIQVLDELTKGEAIIGTGVGQHQMWAAQYYTYKRPRQWLSSAGLGAMGFGLPAAAGASVANPGVTVVDIDGDGSFLMNVQELAMIRIENLPVKVFVLNNQHLGMVVQWEDRFYKANRAHTYLGNPENESEIYPDFVTIAKGFNIPAVRVTKKNEVRAAIKKMLETPGPYLLDIIVPHQEHVLPMIPSGGAFKDMILDGDGRTVY.

Low complexity predominate over residues 1–19 (MATAAAASTALTGATTAAP). The disordered stretch occupies residues 1-23 (MATAAAASTALTGATTAAPKARR). The transit peptide at 1 to 39 (MATAAAASTALTGATTAAPKARRRAHLLATRRALAAPIR) directs the protein to the chloroplast. Position 112 (Glu112) interacts with thiamine diphosphate. Cys132 and Cys278 are joined by a disulfide. FAD is bound by residues Arg214, 320 to 341 (HGTV…LGVR), and 363 to 382 (DIDP…ICAD). The segment at 455-535 (QHQMWAAQYY…VKVFVLNNQH (81 aa)) is thiamine pyrophosphate binding. Positions 506 and 533 each coordinate Mg(2+).

Belongs to the TPP enzyme family. Mg(2+) serves as cofactor. Thiamine diphosphate is required as a cofactor.

It localises to the plastid. Its subcellular location is the chloroplast. It catalyses the reaction 2 pyruvate + H(+) = (2S)-2-acetolactate + CO2. It functions in the pathway amino-acid biosynthesis; L-isoleucine biosynthesis; L-isoleucine from 2-oxobutanoate: step 1/4. It participates in amino-acid biosynthesis; L-valine biosynthesis; L-valine from pyruvate: step 1/4. This is Acetolactate synthase 1, chloroplastic (ALS1) from Zea mays (Maize).